The primary structure comprises 1032 residues: MDSKSRGKSRLNRSILTLVSFFGLVLFYLTWYLYTRGLTGADSPGCRIVYMGPSYARITAFDESHTKFASKYSLYLYREQGRDPLPDENEGFKHLGGIPILFIPGNAGSYRQVRSIAAETSDIYFDHYLDQPDGLNPNAKNYDFFTADFNEDFTAFHGRTLLDQAEYLNEAIKFILGLYANSEHPPRSVVVLGHSMGGVVSRVMVSLPNYIPDSINTIITLASPHAAAPLTFDGDILKIYSAVDRFWFQGYDNKETDNTIAKIAKERLSKISLISITGGLLDSILPADYTTLGYLVPPTNGFTVYTTGIPGVWTPIDHLAIVWCAQLRRRVSNALLEIANFDSPDKTYSLEKRMEIMRKNFLSGFEDYTSQDKVAYDKPADHILLKADSQQINFVQEGQKLKVTPGKMPSPLNVFRLPSPKVSKVQFSLLSSMDIGELKSDNNEGYTQPTLLLCNTMDAIKEDANIIDFTNKETTEIVMFKCIDVRDDSNMIPRSAVGTYSLSESSIGGDKSPFYAIQYNSTILKQYDTVIVTGSLGMESNDNENFLLAELSDYNSSQFNIHEDLFSLMTRGAKFSLPLDKPLSMNIKIPGAWSSILAYKLKVSWPEDRETTEYIPVFRTFIRQWSNEPYEVKWHVNIEANNQVLLNMHGIAPYTPFKVKSKEEYGLNIEIWTDSIPDKSLTTIRLRIDLLNSLRLLVLRYRLATISFCVSIILLALVFQVKHYKETNKFPTFLYGLSCICSPWVFGSILFTLSILTPIMSIKPLQKFLNVIDPVVLQDSNEINLSLTDEFKLNSFFLGLEEKSLWFIGPVFFVMGLGIVSLTFYSLLVAGNVIASISRVLLKRLKLSQTEKKQPNPGKLWANRRIIGVLFVLLVIPIYMPYQFAYVVSCIIQSIQVIKILVADKTNKSILNYHLSLLMLMLWVLPINVPILVVFVHNMTINWTTPFSSHHNFLAILPVILLMERYSNSRTLPKMSQTKYKVTQAFLAYYVFYCLVYGIRHTYWIHHLFNLLCCWLLVLHYDAQDDTSDHVQ.

The N-linked (GlcNAc...) asparagine glycan is linked to asparagine 12. Residues 15–35 (ILTLVSFFGLVLFYLTWYLYT) traverse the membrane as a helical segment. The active site involves serine 195. N-linked (GlcNAc...) asparagine glycosylation is found at asparagine 520 and asparagine 555. 2 helical membrane-spanning segments follow: residues 703–723 (LATI…QVKH) and 740–760 (ICSP…TPIM). A glycan (N-linked (GlcNAc...) asparagine) is linked at asparagine 784. 3 helical membrane passes run 805–825 (LWFI…LTFY), 861–880 (WANR…PIYM), and 884–903 (FAYV…ILVA). Residue asparagine 907 is glycosylated (N-linked (GlcNAc...) asparagine). Residues 916–936 (SLLMLMLWVLPINVPILVVFV) traverse the membrane as a helical segment. 2 N-linked (GlcNAc...) asparagine glycosylation sites follow: asparagine 938 and asparagine 942. A run of 2 helical transmembrane segments spans residues 943-963 (WTTP…ILLM) and 985-1005 (AFLA…TYWI).

Belongs to the GPI inositol-deacylase family.

The protein localises to the endoplasmic reticulum membrane. Functionally, involved in inositol deacylation of GPI-anchored proteins which plays important roles in the quality control and ER-associated degradation of GPI-anchored proteins. The polypeptide is GPI inositol-deacylase (BST1) (Debaryomyces hansenii (strain ATCC 36239 / CBS 767 / BCRC 21394 / JCM 1990 / NBRC 0083 / IGC 2968) (Yeast)).